The chain runs to 251 residues: Triosephosphate isomerase (251 aa).

9–11 contributes to the substrate binding site; it reads NWK. The Electrophile role is filled by histidine 95. Residue glutamate 167 is the Proton acceptor of the active site. Substrate-binding positions include glycine 173, serine 212, and 233 to 234; that span reads GG.

It belongs to the triosephosphate isomerase family. In terms of assembly, homodimer.

Its subcellular location is the cytoplasm. The enzyme catalyses D-glyceraldehyde 3-phosphate = dihydroxyacetone phosphate. The protein operates within carbohydrate biosynthesis; gluconeogenesis. Its pathway is carbohydrate degradation; glycolysis; D-glyceraldehyde 3-phosphate from glycerone phosphate: step 1/1. Involved in the gluconeogenesis. Catalyzes stereospecifically the conversion of dihydroxyacetone phosphate (DHAP) to D-glyceraldehyde-3-phosphate (G3P). This chain is Triosephosphate isomerase, found in Ectopseudomonas mendocina (strain ymp) (Pseudomonas mendocina).